Consider the following 225-residue polypeptide: Cytidylate kinase (225 aa).

ATP is bound at residue 10–18 (GPASSGKST).

It belongs to the cytidylate kinase family. Type 1 subfamily.

The protein localises to the cytoplasm. The enzyme catalyses CMP + ATP = CDP + ADP. The catalysed reaction is dCMP + ATP = dCDP + ADP. The sequence is that of Cytidylate kinase from Streptococcus sanguinis (strain SK36).